The following is a 318-amino-acid chain: MSFRLQPPPPARPNRCQLFGPGSRPALFEKMAASAADVVNLDLEDSVAPDDKAQARLNIIEAINTLDWGKKYLSVRINGLDTPFWYRDVVDLLEQAGDRLDQIMIPKVGCAADVYAVDALVTAIERAKGRTKPVSFEVIIESAAGIAHVEEIAAASPRLQAMSLGAADFAASMGMQTTGIGGTQENYYMLHEGQKHWSDPWHWAQAAIVAACRTHGILPVDGPFGDFSDDEGFRAQARRSATLGMVGKWAIHPKQVALANEVFTPSDKAVAEAREILAAMEAAKARGEGATVYKGRLVDIASIKQAEVIVRQAEMISA.

Substrate is bound by residues F19, R24, K30, and R76. Mg(2+) is bound by residues E141 and D168. Substrate-binding positions include 167 to 168 (AD) and 251 to 252 (IH).

This sequence belongs to the HpcH/HpaI aldolase family. Homohexamer. Dimer of trimers. Mg(2+) serves as cofactor. Requires Mn(2+) as cofactor.

It catalyses the reaction (S)-malyl-CoA = glyoxylate + acetyl-CoA. The enzyme catalyses (2R,3S)-beta-methylmalyl-CoA = propanoyl-CoA + glyoxylate. Involved in the ethylmalonyl-CoA pathway for acetate assimilation. Catalyzes the reversible condensation of glyoxylate and acetyl-CoA to L-malyl-CoA and the reversible condensation of glyoxylate and propionyl-CoA to yield beta-methylmalyl-CoA. The chain is L-malyl-CoA/beta-methylmalyl-CoA lyase from Cereibacter sphaeroides (strain ATCC 17025 / ATH 2.4.3) (Rhodobacter sphaeroides).